The chain runs to 528 residues: GMP synthase [glutamine-hydrolyzing] (528 aa).

The Glutamine amidotransferase type-1 domain maps to 13–204 (SILILDFGSQ…VYGISSCVAD (192 aa)). The Nucleophile role is filled by C90. Catalysis depends on residues H178 and E180. Residues 205–403 (WTTETYIEET…LGLPDEIIKR (199 aa)) enclose the GMPS ATP-PPase domain. 232–238 (SGGVDSS) contacts ATP.

In terms of assembly, homodimer.

It catalyses the reaction XMP + L-glutamine + ATP + H2O = GMP + L-glutamate + AMP + diphosphate + 2 H(+). It participates in purine metabolism; GMP biosynthesis; GMP from XMP (L-Gln route): step 1/1. Catalyzes the synthesis of GMP from XMP. The protein is GMP synthase [glutamine-hydrolyzing] of Prochlorococcus marinus (strain MIT 9312).